Here is a 209-residue protein sequence, read N- to C-terminus: MQFVAFERAKQGTGASRRLRNSGKAPGIVYGGAAEAQLIEIDHNALWHALKKEVFHSSILDMEVNGQTSKVVLRDVQFHPYKQLILHVDFQRVDDKTKVHLKVPLHFEGMEQSQAVKVENCTITPLVHELDVVCMPAQLPEFITVDLSGLTSKSTLGLQGLKLPNGVKAVVRGSNKNPALISIKLPEVAPDASAAPVAAPAAPAKKGKK.

Residues 190-209 (PDASAAPVAAPAAPAKKGKK) form a disordered region.

Belongs to the bacterial ribosomal protein bL25 family. CTC subfamily. Part of the 50S ribosomal subunit; part of the 5S rRNA/L5/L18/L25 subcomplex. Contacts the 5S rRNA. Binds to the 5S rRNA independently of L5 and L18.

Its function is as follows. This is one of the proteins that binds to the 5S RNA in the ribosome where it forms part of the central protuberance. This Delftia acidovorans (strain DSM 14801 / SPH-1) protein is Large ribosomal subunit protein bL25.